Reading from the N-terminus, the 336-residue chain is Dihydroorotate dehydrogenase (quinone) (336 aa).

FMN-binding positions include 62-66 and Thr-86; that span reads AGLDK. Lys-66 contacts substrate. 111–115 is a binding site for substrate; the sequence is NRMGF. FMN contacts are provided by Asn-139 and Asn-172. Residue Asn-172 participates in substrate binding. The Nucleophile role is filled by Ser-175. Residue Asn-177 coordinates substrate. Residues Lys-217 and Thr-245 each coordinate FMN. Position 246–247 (246–247) interacts with substrate; sequence NT. FMN contacts are provided by residues Gly-268, Gly-297, and 318 to 319; that span reads YS.

The protein belongs to the dihydroorotate dehydrogenase family. Type 2 subfamily. Monomer. Requires FMN as cofactor.

It localises to the cell membrane. It catalyses the reaction (S)-dihydroorotate + a quinone = orotate + a quinol. The protein operates within pyrimidine metabolism; UMP biosynthesis via de novo pathway; orotate from (S)-dihydroorotate (quinone route): step 1/1. Functionally, catalyzes the conversion of dihydroorotate to orotate with quinone as electron acceptor. This Escherichia fergusonii (strain ATCC 35469 / DSM 13698 / CCUG 18766 / IAM 14443 / JCM 21226 / LMG 7866 / NBRC 102419 / NCTC 12128 / CDC 0568-73) protein is Dihydroorotate dehydrogenase (quinone).